Reading from the N-terminus, the 260-residue chain is Tryptophan synthase alpha chain (260 aa).

Residues Glu-52 and Asp-63 each act as proton acceptor in the active site.

It belongs to the TrpA family. As to quaternary structure, tetramer of two alpha and two beta chains.

The catalysed reaction is (1S,2R)-1-C-(indol-3-yl)glycerol 3-phosphate + L-serine = D-glyceraldehyde 3-phosphate + L-tryptophan + H2O. It functions in the pathway amino-acid biosynthesis; L-tryptophan biosynthesis; L-tryptophan from chorismate: step 5/5. Its function is as follows. The alpha subunit is responsible for the aldol cleavage of indoleglycerol phosphate to indole and glyceraldehyde 3-phosphate. In Streptococcus thermophilus (strain ATCC BAA-491 / LMD-9), this protein is Tryptophan synthase alpha chain.